The chain runs to 354 residues: Histidinol-phosphate aminotransferase 1 (354 aa).

Position 209 is an N6-(pyridoxal phosphate)lysine (K209).

It belongs to the class-II pyridoxal-phosphate-dependent aminotransferase family. Histidinol-phosphate aminotransferase subfamily. Homodimer. Requires pyridoxal 5'-phosphate as cofactor.

The catalysed reaction is L-histidinol phosphate + 2-oxoglutarate = 3-(imidazol-4-yl)-2-oxopropyl phosphate + L-glutamate. The protein operates within amino-acid biosynthesis; L-histidine biosynthesis; L-histidine from 5-phospho-alpha-D-ribose 1-diphosphate: step 7/9. The sequence is that of Histidinol-phosphate aminotransferase 1 (hisC1) from Oceanobacillus iheyensis (strain DSM 14371 / CIP 107618 / JCM 11309 / KCTC 3954 / HTE831).